Consider the following 538-residue polypeptide: Eukaryotic translation initiation factor 3 subunit L (538 aa).

In terms of domain architecture, PCI spans 305–513 (TFSDILLYIQ…IHIADTKVSH (209 aa)).

It belongs to the eIF-3 subunit L family. In terms of assembly, component of the eukaryotic translation initiation factor 3 (eIF-3) complex. The eIF-3 complex interacts with pix.

The protein resides in the cytoplasm. Functionally, component of the eukaryotic translation initiation factor 3 (eIF-3) complex, which is involved in protein synthesis of a specialized repertoire of mRNAs and, together with other initiation factors, stimulates binding of mRNA and methionyl-tRNAi to the 40S ribosome. The eIF-3 complex specifically targets and initiates translation of a subset of mRNAs involved in cell proliferation. This Drosophila mojavensis (Fruit fly) protein is Eukaryotic translation initiation factor 3 subunit L.